Consider the following 85-residue polypeptide: UPF0512 protein U (85 aa).

This sequence belongs to the UPF0512 family.

The chain is UPF0512 protein U from Dictyostelium discoideum (Social amoeba).